The following is a 238-amino-acid chain: uncharacterized protein (238 aa).

The disordered stretch occupies residues 1-20; the sequence is MPNLHSLPLGTRPENAIRNN.

Belongs to the PEP2 family.

This is an uncharacterized protein from Emericella nidulans (strain FGSC A4 / ATCC 38163 / CBS 112.46 / NRRL 194 / M139) (Aspergillus nidulans).